Reading from the N-terminus, the 226-residue chain is Cytidylate kinase (226 aa).

10–18 (GFSSTGKST) is an ATP binding site.

Belongs to the cytidylate kinase family. Type 1 subfamily.

It localises to the cytoplasm. The catalysed reaction is CMP + ATP = CDP + ADP. It catalyses the reaction dCMP + ATP = dCDP + ADP. This Flavobacterium psychrophilum (strain ATCC 49511 / DSM 21280 / CIP 103535 / JIP02/86) protein is Cytidylate kinase.